The sequence spans 475 residues: MSPQTETKASVGFKAGVKDYKLTYYTPDYETKDTDILAAFRVTPQPGVPPEEAGAAVAAESSTGTWTTVWTDGLTSLDRYKGRCYHIEPVPGEESQFIAYVAYPLDLFEEGSVTNMFTSIVGNVFGFKALRALRLEDLRIPNAYVKTFQGPPHGIQVERDKLNKYGRPLLGCTIKPKLGLSAKNYGRAVYECLRGGLDFTKDDENVNSQPFMRWRDRFLFCAEALFKAQEETGEIKGHYLNATAGTCEEMMKRAVFARELGVPIVMHDYLTGGFTANTTLAHYCRDNGLLLHIHRAMHAVIDRQKNHGMHFRVLAKALRMSGGDHIHAGTVVGKLEGEREITLGFVDLLRDDFVEKDRSRGIYFTQDWVSLPGVLPVASGGIHVWHMPALTEIFGDDSVLQFGGGTLGHPWGNAPGAVANRVALEACVQARNEGRDLAREGNEIIREASKWSPELAAACEIWKEIKFEFQAMDTL.

Positions 1 to 2 (MS) are excised as a propeptide. Residue Pro-3 is modified to N-acetylproline. Lys-14 carries the N6,N6,N6-trimethyllysine modification. Residues Asn-123 and Thr-173 each contribute to the substrate site. Residue Lys-175 is the Proton acceptor of the active site. Lys-177 contributes to the substrate binding site. Lys-201, Asp-203, and Glu-204 together coordinate Mg(2+). Lys-201 bears the N6-carboxylysine mark. His-294 acts as the Proton acceptor in catalysis. Residues Arg-295, His-327, and Ser-379 each contribute to the substrate site.

It belongs to the RuBisCO large chain family. Type I subfamily. Heterohexadecamer of 8 large chains and 8 small chains; disulfide-linked. The disulfide link is formed within the large subunit homodimers. Mg(2+) is required as a cofactor. Post-translationally, the disulfide bond which can form in the large chain dimeric partners within the hexadecamer appears to be associated with oxidative stress and protein turnover.

The protein localises to the plastid. The protein resides in the chloroplast. It carries out the reaction 2 (2R)-3-phosphoglycerate + 2 H(+) = D-ribulose 1,5-bisphosphate + CO2 + H2O. The catalysed reaction is D-ribulose 1,5-bisphosphate + O2 = 2-phosphoglycolate + (2R)-3-phosphoglycerate + 2 H(+). RuBisCO catalyzes two reactions: the carboxylation of D-ribulose 1,5-bisphosphate, the primary event in carbon dioxide fixation, as well as the oxidative fragmentation of the pentose substrate in the photorespiration process. Both reactions occur simultaneously and in competition at the same active site. The protein is Ribulose bisphosphate carboxylase large chain of Lotus japonicus (Lotus corniculatus var. japonicus).